The sequence spans 247 residues: 2,5-diamino-6-ribosylamino-4(3H)-pyrimidinone 5'-phosphate reductase (247 aa).

NADP(+) contacts are provided by residues Thr-75, Asp-79, Gly-165, and Gly-187 to Ile-191.

The protein belongs to the HTP reductase family. Homodimer.

The enzyme catalyses 2,5-diamino-6-(1-D-ribitylamino)pyrimidin-4(3H)-one 5'-phosphate + NADP(+) = 2,5-diamino-6-(1-D-ribosylamino)pyrimidin-4(3H)-one 5'-phosphate + NADPH + H(+). It catalyses the reaction 2,5-diamino-6-(1-D-ribitylamino)pyrimidin-4(3H)-one 5'-phosphate + NAD(+) = 2,5-diamino-6-(1-D-ribosylamino)pyrimidin-4(3H)-one 5'-phosphate + NADH + H(+). The protein operates within cofactor biosynthesis; riboflavin biosynthesis. Its function is as follows. Catalyzes an early step in riboflavin biosynthesis, the NADPH-dependent reduction of the ribose side chain of 2,5-diamino-6-ribosylamino-4(3H)-pyrimidinone 5'-phosphate, yielding 2,5-diamino-6-ribitylamino-4(3H)-pyrimidinone 5'-phosphate. The protein is 2,5-diamino-6-ribosylamino-4(3H)-pyrimidinone 5'-phosphate reductase (RIB7) of Debaryomyces hansenii (strain ATCC 36239 / CBS 767 / BCRC 21394 / JCM 1990 / NBRC 0083 / IGC 2968) (Yeast).